The chain runs to 505 residues: SusD-like protein P2 (505 aa).

An N-terminal signal peptide occupies residues 1 to 17; sequence MKKYKITFIVLLLTLVG. Cys-18 carries N-palmitoyl cysteine lipidation. Residue Cys-18 is the site of S-diacylglycerol cysteine attachment.

It belongs to the SusD family.

It localises to the cell outer membrane. Functionally, polysaccharide-binding protein probably involved in ulvan degradation. Ulvan is the main polysaccharide component of the Ulvales (green seaweed) cell wall. It is composed of disaccharide building blocks comprising 3-sulfated rhamnose (Rha3S) linked to D-glucuronic acid (GlcA), L-iduronic acid (IduA), or D-xylose (Xyl). The SusD-like protein may mediate ulvan oligomer-binding before transport in the periplasm for further degradation. The polypeptide is SusD-like protein P2 (Formosa agariphila (strain DSM 15362 / KCTC 12365 / LMG 23005 / KMM 3901 / M-2Alg 35-1)).